We begin with the raw amino-acid sequence, 347 residues long: MIPLRKNIARMAGYVPGYQPEDPAAYIKLNTNENAYPPSPKVLEAIMAEVGEGLRRYPDAASRAGREAAARLYGFLPEWIVMANGSDEVLNNLIRAFADEGDEIAYVYPSYSYYATLAEIQGARVKTYGLTDDWKLANFPERYDGKIFFLTNPNAPYGFTFSREFIEELAGRVAGMLVVDETYADFAGDTALDLVRKYENVVVTRTLSKSYSLAGMRLGLAVARPEVIAALDKIRDHYNLDRLAQAAAVAALGDQDYFREAVRKICETRDWFSAELRKLRYSVIPSSGNYVFTTPPDRDGARVYQGLFDRKILVRHFSDPNLAHGLRISIGTREEMEKTMEALREIG.

Residue Lys-209 is modified to N6-(pyridoxal phosphate)lysine.

This sequence belongs to the class-II pyridoxal-phosphate-dependent aminotransferase family. Histidinol-phosphate aminotransferase subfamily. In terms of assembly, homodimer. The cofactor is pyridoxal 5'-phosphate.

The enzyme catalyses L-histidinol phosphate + 2-oxoglutarate = 3-(imidazol-4-yl)-2-oxopropyl phosphate + L-glutamate. The protein operates within amino-acid biosynthesis; L-histidine biosynthesis; L-histidine from 5-phospho-alpha-D-ribose 1-diphosphate: step 7/9. The sequence is that of Histidinol-phosphate aminotransferase from Geotalea uraniireducens (strain Rf4) (Geobacter uraniireducens).